The following is a 181-amino-acid chain: Oligoribonuclease (181 aa).

The 164-residue stretch at 8 to 171 (LIWIDLEMTG…DDIRESVAEL (164 aa)) folds into the Exonuclease domain. Tyrosine 129 is an active-site residue.

Belongs to the oligoribonuclease family.

It is found in the cytoplasm. Its function is as follows. 3'-to-5' exoribonuclease specific for small oligoribonucleotides. The sequence is that of Oligoribonuclease from Salmonella choleraesuis (strain SC-B67).